Consider the following 95-residue polypeptide: Large ribosomal subunit protein eL30 (95 aa).

It belongs to the eukaryotic ribosomal protein eL30 family.

In Methanospirillum hungatei JF-1 (strain ATCC 27890 / DSM 864 / NBRC 100397 / JF-1), this protein is Large ribosomal subunit protein eL30.